A 602-amino-acid polypeptide reads, in one-letter code: Chaperone protein DnaK (602 aa).

Thr-199 bears the Phosphothreonine; by autocatalysis mark.

This sequence belongs to the heat shock protein 70 family.

In terms of biological role, acts as a chaperone. In Carsonella ruddii (strain PV), this protein is Chaperone protein DnaK.